The following is a 292-amino-acid chain: Homoserine kinase (292 aa).

84-94 lines the ATP pocket; it reads PLSRGLGSSSA.

It belongs to the GHMP kinase family. Homoserine kinase subfamily.

It localises to the cytoplasm. The catalysed reaction is L-homoserine + ATP = O-phospho-L-homoserine + ADP + H(+). The protein operates within amino-acid biosynthesis; L-threonine biosynthesis; L-threonine from L-aspartate: step 4/5. In terms of biological role, catalyzes the ATP-dependent phosphorylation of L-homoserine to L-homoserine phosphate. In Campylobacter jejuni subsp. jejuni serotype O:23/36 (strain 81-176), this protein is Homoserine kinase.